A 359-amino-acid chain; its full sequence is POU domain, class 5, transcription factor 1B (359 aa).

2 disordered regions span residues Met1–Pro53 and Gln87–Thr116. Ser111 is subject to Phosphoserine. Residues Asp138–Asp212 form the POU-specific domain. Positions Ala229–Ser288 form a DNA-binding region, homeobox. At Thr235 the chain carries Phosphothreonine. Phosphoserine is present on residues Ser236, Ser288, and Ser289. Residues Ser287–Pro322 are disordered. Low complexity predominate over residues Ala299 to Val309. At Ser354 the chain carries Phosphoserine.

This sequence belongs to the POU transcription factor family. Class-5 subfamily. Detected in epithelial cells of the prostate (at protein level). Detected at the mRNA level in several cancer tissues (breast, uterine cervix, lung, thyroid gland, esophagus, colon, urinary bladder, and glioma).

The protein resides in the nucleus. It is found in the cytoplasm. In terms of biological role, shows weak transcriptional activator activity. The polypeptide is POU domain, class 5, transcription factor 1B (POU5F1B) (Homo sapiens (Human)).